The chain runs to 311 residues: Apulose-4-phosphate transketolase subunit B (311 aa).

It belongs to the transketolase family. As to quaternary structure, probable heterodimer composed of AptA and AptB. It depends on thiamine diphosphate as a cofactor.

It carries out the reaction apulose 4-phosphate + D-glyceraldehyde 3-phosphate = D-xylulose 5-phosphate + dihydroxyacetone phosphate. It participates in carbohydrate metabolism. Involved in catabolism of D-apiose. Catalyzes the transfer of the glycolaldehyde group from apulose-4-phosphate to D-glyceraldehyde 3-phosphate, generating dihydroxyacetone phosphate and D-xylulose-5-phosphate. This chain is Apulose-4-phosphate transketolase subunit B, found in Actinobacillus succinogenes (strain ATCC 55618 / DSM 22257 / CCUG 43843 / 130Z).